Consider the following 307-residue polypeptide: Acyl transferase (307 aa).

Residues S116, D213, and H243 each act as charge relay system in the active site.

Belongs to the LuxD family.

Its pathway is lipid metabolism; fatty acid reduction for biolumincescence. Functionally, acyl transferase is part of the fatty acid reductase system required for aldehyde biosynthesis; it produces fatty acids for the luminescent reaction. The sequence is that of Acyl transferase from Photorhabdus laumondii subsp. laumondii (strain DSM 15139 / CIP 105565 / TT01) (Photorhabdus luminescens subsp. laumondii).